The primary structure comprises 193 residues: Allatostatin A (193 aa).

The N-terminal stretch at 1–25 (MKTSSLIAMRLIIFYLLSVVGRSTA) is a signal peptide. A propeptide spanning residues 26–64 (AVEEAPASSLHIPRLNPLSSNLEYDEPSEKRAYAYISEY) is cleaved from the precursor. An Isoleucine amide modification is found at isoleucine 74. Residues 78 to 84 (WIDNSED) constitute a propeptide that is removed on maturation. Residues isoleucine 94 and isoleucine 105 each carry the isoleucine amide modification. The propeptide occupies 109–139 (NSGYRPLGMDFSVDNMDFHSREDNLDDFIDD). At isoleucine 150 the chain carries Isoleucine amide. The residue at position 165 (serine 165) is a Serine amide. Residues 169-193 (LNDVVGPKYLLGLGKGLSENENLIQ) constitute a propeptide that is removed on maturation.

It belongs to the allatostatin family. As to expression, allatostatins A1, A2 and A3 are expressed in brain, antennal lobes, optical lobes, gnathal ganglia, the retrocerebral complex and thoracic, abdominal and ventral ganglia. Allatostain A4 is expressed in brain (at protein level).

The protein resides in the secreted. Its function is as follows. May act as a neurotransmitter or neuromodulator. The polypeptide is Allatostatin A (Camponotus floridanus (Florida carpenter ant)).